Reading from the N-terminus, the 595-residue chain is Protein UL31 (595 aa).

The first 40 residues, 1-40 (MGDKPTLVTLLTVAVSSPPPSSPLPLVSFTELLLPPPSVA), serve as a signal peptide directing secretion. The tract at residues 47-94 (TATSEVGEKTAEQEVAAAGPETRNERRENREDEGGETRTTGTTAVKRS) is disordered. The segment covering 68 to 82 (TRNERRENREDEGGE) has biased composition (basic and acidic residues).

This sequence belongs to the herpesviridae U10 family. As to quaternary structure, interacts with host CGAS.

The protein localises to the host cytoplasm. It localises to the host nucleus. In terms of biological role, plays a role in the inhibition of host innate immune system by targeting host CGAS and promoting dissociation of DNA from CGAS, thereby inhibiting the enzymatic activity of CGAS. The sequence is that of Protein UL31 (UL31) from Human cytomegalovirus (strain Merlin) (HHV-5).